The following is a 145-amino-acid chain: Ribosome maturation factor RimP (145 aa).

This sequence belongs to the RimP family.

It is found in the cytoplasm. Required for maturation of 30S ribosomal subunits. This Borreliella burgdorferi (strain ATCC 35210 / DSM 4680 / CIP 102532 / B31) (Borrelia burgdorferi) protein is Ribosome maturation factor RimP.